We begin with the raw amino-acid sequence, 129 residues long: Class I hydrophobin 11 (129 aa).

The signal sequence occupies residues 1–19 (MRLTPLLAALALPLLTVLA). Disulfide bonds link Cys48–Cys106, Cys55–Cys100, Cys56–Cys89, and Cys107–Cys122.

The protein belongs to the fungal hydrophobin family. In terms of assembly, self-assembles to form functional amyloid fibrils called rodlets. Self-assembly into fibrillar rodlets occurs spontaneously at hydrophobic:hydrophilic interfaces and the rodlets further associate laterally to form amphipathic monolayers.

Its subcellular location is the secreted. It localises to the cell wall. Its function is as follows. Aerial growth, conidiation, and dispersal of filamentous fungi in the environment rely upon a capability of their secreting small amphipathic proteins called hydrophobins (HPBs) with low sequence identity. Class I can self-assemble into an outermost layer of rodlet bundles on aerial cell surfaces, conferring cellular hydrophobicity that supports fungal growth, development and dispersal; whereas Class II form highly ordered films at water-air interfaces through intermolecular interactions but contribute nothing to the rodlet structure. The polypeptide is Class I hydrophobin 11 (Pleurotus ostreatus (strain PC15) (Oyster mushroom)).